Consider the following 309-residue polypeptide: Aspartate carbamoyltransferase catalytic subunit (309 aa).

The carbamoyl phosphate site is built by Arg-58 and Thr-59. An L-aspartate-binding site is contributed by Lys-86. The carbamoyl phosphate site is built by Arg-108, His-136, and Gln-139. The L-aspartate site is built by Arg-170 and Arg-224. The carbamoyl phosphate site is built by Gly-266 and Pro-267.

This sequence belongs to the aspartate/ornithine carbamoyltransferase superfamily. ATCase family. Heterododecamer (2C3:3R2) of six catalytic PyrB chains organized as two trimers (C3), and six regulatory PyrI chains organized as three dimers (R2).

It catalyses the reaction carbamoyl phosphate + L-aspartate = N-carbamoyl-L-aspartate + phosphate + H(+). Its pathway is pyrimidine metabolism; UMP biosynthesis via de novo pathway; (S)-dihydroorotate from bicarbonate: step 2/3. Functionally, catalyzes the condensation of carbamoyl phosphate and aspartate to form carbamoyl aspartate and inorganic phosphate, the committed step in the de novo pyrimidine nucleotide biosynthesis pathway. The sequence is that of Aspartate carbamoyltransferase catalytic subunit from Campylobacter concisus (strain 13826).